We begin with the raw amino-acid sequence, 431 residues long: MSLDKSKHEKYVQILREELVPALGCTEPIAIAYTAANLRKIMGGIPDEILIESSGNIIKNAKSVIVPNTGGMKGMEASALIGLIGGNADKGLEVLADVTEEHVKLAHEYLAKSCTKLKLMDTPASLHIRITGKLNGDTGVAELIHQHTNIVLLKKNDEIIFEKPFSLESAAGALTDRTCLNVKDILDFADTVPVDEVSPIIMRQVEYNMRVSEDGLKTSYGIETGKNILKYNQKKGDDFSVKVQAEGEVAAASDARMCGCSYPVITNSGSGNQGLAVSVPVVVYARENKISEEKLIRCLIVSNLLAIHQKTGIGRLSAYCGAVTAGAACAAAITYMKGGSYEQVCGTIVNTLGTVSGILCDGAKQSCAAKIASALDSALFSHELAMDGNFFAGGDGIVKDDIEKTIAGIGVVAAQGMHKTDEVVLQVMLKD.

This sequence belongs to the UPF0597 family.

The sequence is that of UPF0597 protein TDE_2144 from Treponema denticola (strain ATCC 35405 / DSM 14222 / CIP 103919 / JCM 8153 / KCTC 15104).